A 433-amino-acid polypeptide reads, in one-letter code: Elongation factor 1-alpha (433 aa).

Residues 5-220 (KPHINVVFIG…ALDMLKPPQL (216 aa)) enclose the tr-type G domain. The G1 stretch occupies residues 14-21 (GHVDHGKS). 14-21 (GHVDHGKS) serves as a coordination point for GTP. Serine 21 contacts Mg(2+). Residues 70–74 (GVTID) are G2. The segment at 91–94 (DAPG) is G3. GTP is bound by residues 91–95 (DAPGH) and 146–149 (NKMD). The segment at 146–149 (NKMD) is G4. The tract at residues 186–188 (ASF) is G5.

It belongs to the TRAFAC class translation factor GTPase superfamily. Classic translation factor GTPase family. EF-Tu/EF-1A subfamily.

It localises to the cytoplasm. The catalysed reaction is GTP + H2O = GDP + phosphate + H(+). Functionally, GTP hydrolase that promotes the GTP-dependent binding of aminoacyl-tRNA to the A-site of ribosomes during protein biosynthesis. This is Elongation factor 1-alpha from Nanoarchaeum equitans (strain Kin4-M).